Reading from the N-terminus, the 349-residue chain is ATP phosphoribosyltransferase regulatory subunit (349 aa).

A disordered region spans residues 327–349 (GRGRGVRPRRASARGGRARARPR). The span at 330 to 349 (RGVRPRRASARGGRARARPR) shows a compositional bias: basic residues.

It belongs to the class-II aminoacyl-tRNA synthetase family. HisZ subfamily. Heteromultimer composed of HisG and HisZ subunits.

The protein localises to the cytoplasm. It participates in amino-acid biosynthesis; L-histidine biosynthesis; L-histidine from 5-phospho-alpha-D-ribose 1-diphosphate: step 1/9. Required for the first step of histidine biosynthesis. May allow the feedback regulation of ATP phosphoribosyltransferase activity by histidine. The chain is ATP phosphoribosyltransferase regulatory subunit from Anaeromyxobacter dehalogenans (strain 2CP-1 / ATCC BAA-258).